The following is a 420-amino-acid chain: Enolase (420 aa).

A (2R)-2-phosphoglycerate-binding site is contributed by Gln162. Glu206 acts as the Proton donor in catalysis. Asp241, Glu282, and Asp308 together coordinate Mg(2+). 4 residues coordinate (2R)-2-phosphoglycerate: Lys333, Arg362, Ser363, and Lys384. The active-site Proton acceptor is the Lys333.

The protein belongs to the enolase family. Mg(2+) is required as a cofactor.

It localises to the cytoplasm. It is found in the secreted. The protein localises to the cell surface. The catalysed reaction is (2R)-2-phosphoglycerate = phosphoenolpyruvate + H2O. It participates in carbohydrate degradation; glycolysis; pyruvate from D-glyceraldehyde 3-phosphate: step 4/5. Catalyzes the reversible conversion of 2-phosphoglycerate (2-PG) into phosphoenolpyruvate (PEP). It is essential for the degradation of carbohydrates via glycolysis. This chain is Enolase, found in Methanothrix thermoacetophila (strain DSM 6194 / JCM 14653 / NBRC 101360 / PT) (Methanosaeta thermophila).